The chain runs to 126 residues: MAIIGLGTDIADIERVDKVFARSGDAFAERILAPSELVIYHSLKLKARYLAKRFAVKEAASKALGTGIACGVSFQDFIVSNDERGKPLLSLSGKAAELAESMGVKHVHLTLADEKRYAVATVILES.

Mg(2+) is bound by residues Asp-9 and Glu-58.

The protein belongs to the P-Pant transferase superfamily. AcpS family. Requires Mg(2+) as cofactor.

It is found in the cytoplasm. It carries out the reaction apo-[ACP] + CoA = holo-[ACP] + adenosine 3',5'-bisphosphate + H(+). Transfers the 4'-phosphopantetheine moiety from coenzyme A to a Ser of acyl-carrier-protein. This chain is Holo-[acyl-carrier-protein] synthase, found in Photobacterium profundum (strain SS9).